The sequence spans 166 residues: Specificity protein transcription factor 2 (166 aa).

The segment at 17-45 is disordered; the sequence is SYHHSLPSISPPDSPASTSASSSSSSIGA. Over residues 31–42 the composition is skewed to low complexity; sequence PASTSASSSSSS. 3 consecutive C2H2-type zinc fingers follow at residues 77-101, 107-131, and 137-160; these read HLCSVPGCGKTYKKTSHLRAHLRKH, FVCDWFDCGKRFDRSDQLIRHKRTH, and FACKFCIRQFSRSDHLQQHLTSVH.

It belongs to the Sp1 C2H2-type zinc-finger protein family.

Functionally, transcription factor. Probably acts downstream of the Wnt signaling pathway. This is Specificity protein transcription factor 2 from Caenorhabditis elegans.